The sequence spans 125 residues: Large ribosomal subunit protein bL12 (125 aa).

The protein belongs to the bacterial ribosomal protein bL12 family. Homodimer. Part of the ribosomal stalk of the 50S ribosomal subunit. Forms a multimeric L10(L12)X complex, where L10 forms an elongated spine to which 2 to 4 L12 dimers bind in a sequential fashion. Binds GTP-bound translation factors.

Functionally, forms part of the ribosomal stalk which helps the ribosome interact with GTP-bound translation factors. Is thus essential for accurate translation. The protein is Large ribosomal subunit protein bL12 of Rickettsia typhi (strain ATCC VR-144 / Wilmington).